Consider the following 237-residue polypeptide: Ribonuclease PH (237 aa).

Residues Arg86 and 124–126 (GTR) contribute to the phosphate site.

This sequence belongs to the RNase PH family. Homohexameric ring arranged as a trimer of dimers.

It catalyses the reaction tRNA(n+1) + phosphate = tRNA(n) + a ribonucleoside 5'-diphosphate. In terms of biological role, phosphorolytic 3'-5' exoribonuclease that plays an important role in tRNA 3'-end maturation. Removes nucleotide residues following the 3'-CCA terminus of tRNAs; can also add nucleotides to the ends of RNA molecules by using nucleoside diphosphates as substrates, but this may not be physiologically important. Probably plays a role in initiation of 16S rRNA degradation (leading to ribosome degradation) during starvation. This Methylobacterium nodulans (strain LMG 21967 / CNCM I-2342 / ORS 2060) protein is Ribonuclease PH.